We begin with the raw amino-acid sequence, 232 residues long: MKIGIIGAMEEEVTLLRDKIDNRQTITLGGCEIYTGQLNGTEVALLKSGIGKVAAALGATLLLGHCKPDVIINTGSAGGLASTLKVGDIVVSDEARYHDADVTAFGYEYGQLPGCPAGFKADDKLIAAAESCIRELNLNAVRGLIVSGDAFINGSVGLAKIRHNFPDAVAVEMEATAIAHVCHNFNVPFVVVRAISDVADQQSHLSFDEFLAVAAKQSTLMVETLVQKLAHG.

The active-site Proton acceptor is Glu-12. Substrate-binding positions include Gly-78, Ile-152, and 173–174; that span reads ME. The active-site Proton donor is the Asp-197.

This sequence belongs to the PNP/UDP phosphorylase family. MtnN subfamily. Homodimer.

It catalyses the reaction S-adenosyl-L-homocysteine + H2O = S-(5-deoxy-D-ribos-5-yl)-L-homocysteine + adenine. It carries out the reaction S-methyl-5'-thioadenosine + H2O = 5-(methylsulfanyl)-D-ribose + adenine. The enzyme catalyses 5'-deoxyadenosine + H2O = 5-deoxy-D-ribose + adenine. The protein operates within amino-acid biosynthesis; L-methionine biosynthesis via salvage pathway; S-methyl-5-thio-alpha-D-ribose 1-phosphate from S-methyl-5'-thioadenosine (hydrolase route): step 1/2. Functionally, catalyzes the irreversible cleavage of the glycosidic bond in both 5'-methylthioadenosine (MTA) and S-adenosylhomocysteine (SAH/AdoHcy) to adenine and the corresponding thioribose, 5'-methylthioribose and S-ribosylhomocysteine, respectively. Also cleaves 5'-deoxyadenosine, a toxic by-product of radical S-adenosylmethionine (SAM) enzymes, into 5-deoxyribose and adenine. Thus, is required for in vivo function of the radical SAM enzymes biotin synthase and lipoic acid synthase, that are inhibited by 5'-deoxyadenosine accumulation. The polypeptide is 5'-methylthioadenosine/S-adenosylhomocysteine nucleosidase (Salmonella paratyphi A (strain ATCC 9150 / SARB42)).